Reading from the N-terminus, the 211-residue chain is Thiamine-phosphate synthase (211 aa).

4-amino-2-methyl-5-(diphosphooxymethyl)pyrimidine-binding positions include 37 to 41 and asparagine 69; that span reads QLRIK. Positions 70 and 89 each coordinate Mg(2+). Serine 108 contributes to the 4-amino-2-methyl-5-(diphosphooxymethyl)pyrimidine binding site. 134 to 136 serves as a coordination point for 2-[(2R,5Z)-2-carboxy-4-methylthiazol-5(2H)-ylidene]ethyl phosphate; that stretch reads TQT. Residue lysine 137 coordinates 4-amino-2-methyl-5-(diphosphooxymethyl)pyrimidine. 2-[(2R,5Z)-2-carboxy-4-methylthiazol-5(2H)-ylidene]ethyl phosphate-binding positions include glycine 166 and 186–187; that span reads VS.

Belongs to the thiamine-phosphate synthase family. Requires Mg(2+) as cofactor.

The catalysed reaction is 2-[(2R,5Z)-2-carboxy-4-methylthiazol-5(2H)-ylidene]ethyl phosphate + 4-amino-2-methyl-5-(diphosphooxymethyl)pyrimidine + 2 H(+) = thiamine phosphate + CO2 + diphosphate. It catalyses the reaction 2-(2-carboxy-4-methylthiazol-5-yl)ethyl phosphate + 4-amino-2-methyl-5-(diphosphooxymethyl)pyrimidine + 2 H(+) = thiamine phosphate + CO2 + diphosphate. The enzyme catalyses 4-methyl-5-(2-phosphooxyethyl)-thiazole + 4-amino-2-methyl-5-(diphosphooxymethyl)pyrimidine + H(+) = thiamine phosphate + diphosphate. It participates in cofactor biosynthesis; thiamine diphosphate biosynthesis; thiamine phosphate from 4-amino-2-methyl-5-diphosphomethylpyrimidine and 4-methyl-5-(2-phosphoethyl)-thiazole: step 1/1. Condenses 4-methyl-5-(beta-hydroxyethyl)thiazole monophosphate (THZ-P) and 2-methyl-4-amino-5-hydroxymethyl pyrimidine pyrophosphate (HMP-PP) to form thiamine monophosphate (TMP). In Salmonella paratyphi B (strain ATCC BAA-1250 / SPB7), this protein is Thiamine-phosphate synthase.